Consider the following 100-residue polypeptide: UPF0251 protein swp_0615 (100 aa).

This sequence belongs to the UPF0251 family.

In Shewanella piezotolerans (strain WP3 / JCM 13877), this protein is UPF0251 protein swp_0615.